Consider the following 1371-residue polypeptide: DNA-directed RNA polymerase subunit beta (1371 aa).

The protein belongs to the RNA polymerase beta chain family. The RNAP catalytic core consists of 2 alpha, 1 beta, 1 beta' and 1 omega subunit. When a sigma factor is associated with the core the holoenzyme is formed, which can initiate transcription.

The enzyme catalyses RNA(n) + a ribonucleoside 5'-triphosphate = RNA(n+1) + diphosphate. DNA-dependent RNA polymerase catalyzes the transcription of DNA into RNA using the four ribonucleoside triphosphates as substrates. The chain is DNA-directed RNA polymerase subunit beta from Geobacter sp. (strain M21).